Reading from the N-terminus, the 466-residue chain is Cell division protein FtsP (466 aa).

The segment at residues Met-1–Ala-28 is a signal peptide (tat-type signal).

It belongs to the FtsP family. Predicted to be exported by the Tat system. The position of the signal peptide cleavage has not been experimentally proven.

It is found in the periplasm. Its function is as follows. Cell division protein that is required for growth during stress conditions. May be involved in protecting or stabilizing the divisomal assembly under conditions of stress. The polypeptide is Cell division protein FtsP (Gallibacterium anatis (strain UMN179) (Pasteurella anatis)).